We begin with the raw amino-acid sequence, 328 residues long: Peroxisomal adenine nucleotide transporter 1 (328 aa).

A run of 6 helical transmembrane segments spans residues 1 to 21 (MLTLESALTGAVASAMANIAV), 78 to 98 (TVTTVATFVQNFVYFFWYTFI), 128 to 148 (LVLGVAAASISQLFTSPMAVV), 185 to 202 (LRTGLALTINPSITYASF), 226 to 246 (FILGVLSKMISTLVTQPLIVA), and 277 to 297 (WKGVLPQLTKGVIVQGLLFAF). Solcar repeat units lie at residues 1–101 (MLTL…IRKS), 122–208 (PSTI…LKEV), and 220–304 (LSAV…LTKS).

The protein belongs to the mitochondrial carrier (TC 2.A.29) family.

Its subcellular location is the peroxisome membrane. In terms of biological role, adenine nucleotide transporter involved in the uniport of ATP and adenine nucleotide hetero-exchange transport between the cytosol and the peroxisomal lumen. This transport is accompanied by a proton transport from the peroxisomal lumen to the cytosol. Transport of ATP into the peroxisome is required for beta-oxidation of medium-chain fatty acids. Required for growth on medium-chain fatty acids, pH gradient formation in peroxisomes and for normal peroxisome proliferation. This is Peroxisomal adenine nucleotide transporter 1 (ANT1) from Saccharomyces cerevisiae (strain ATCC 204508 / S288c) (Baker's yeast).